Consider the following 1759-residue polypeptide: Putative ATP-dependent RNA helicase TDRD12 (1759 aa).

One can recognise a Tudor 1 domain in the interval 74 to 153 (FQNLEQVWFS…KLSNTETRAV (80 aa)). A compositionally biased stretch (low complexity) spans 480-495 (NSAASESSTKSSMDSS). Residues 480 to 506 (NSAASESSTKSSMDSSRISDEDDLSSD) are disordered. The Helicase ATP-binding domain maps to 611–789 (WGTILRGLST…DFLEPIVLKA (179 aa)). 624 to 631 (SPPRSGKT) contacts ATP. The region spanning 823-980 (NVLQFIDSVQ…NVPKILDEVS (158 aa)) is the Helicase C-terminal domain. The Tudor 2 domain maps to 1335 to 1394 (GSNVGDIVLAKFPDDSMYERARIDHIYSEDKVKCFFVDQGDWRDVSTNDLATITENFITQ). A CS domain is found at 1618–1704 (LSKPKICWSQ…LMCRNWLALT (87 aa)).

Interacts (via Tudor domain 2) with Siwi. Component of the PET complex, at least composed of EXD1, SIWI, TDRD12 and piRNAs. Expressed in the yolk cells. Not detected in yolk granules.

Its subcellular location is the chromosome. The protein localises to the cytoplasm. The protein resides in the cytosol. It is found in the nucleus membrane. The catalysed reaction is ATP + H2O = ADP + phosphate + H(+). Functionally, probable ATP-binding RNA helicase required during spermatogenesis to repress transposable elements and preventing their mobilization, which is essential for the germline integrity. Acts via the piRNA metabolic process, which mediates the repression of transposable elements during meiosis by forming complexes composed of piRNAs and Piwi proteins and governs the methylation and subsequent repression of transposons. This Bombyx mori (Silk moth) protein is Putative ATP-dependent RNA helicase TDRD12 (TDRD12).